We begin with the raw amino-acid sequence, 233 residues long: Cytidylate kinase (233 aa).

ATP is bound at residue 15–23; the sequence is GPSGAGKST. Residues 183–201 show a composition bias toward basic and acidic residues; that stretch reads RRDEQDSGREHAPLRRADD. The interval 183–202 is disordered; sequence RRDEQDSGREHAPLRRADDA.

This sequence belongs to the cytidylate kinase family. Type 1 subfamily.

It is found in the cytoplasm. It catalyses the reaction CMP + ATP = CDP + ADP. It carries out the reaction dCMP + ATP = dCDP + ADP. This chain is Cytidylate kinase, found in Geobacter sulfurreducens (strain ATCC 51573 / DSM 12127 / PCA).